Here is a 172-residue protein sequence, read N- to C-terminus: uncharacterized protein (172 aa).

3 helical membrane-spanning segments follow: residues 7 to 27, 59 to 79, and 89 to 109; these read ILIS…CYGI, LMIF…LYLF, and FSLT…LFVK.

It to M.jannaschii MJ0695.

The protein localises to the cell membrane. This is an uncharacterized protein from Methanocaldococcus jannaschii (strain ATCC 43067 / DSM 2661 / JAL-1 / JCM 10045 / NBRC 100440) (Methanococcus jannaschii).